Here is a 471-residue protein sequence, read N- to C-terminus: Apyrase 1 (471 aa).

Residues 1 to 21 (MTAKRAIGRHESLADKVHRHR) lie on the Cytoplasmic side of the membrane. The chain crosses the membrane as a helical; Signal-anchor for type II membrane protein span at residues 22 to 42 (GLLLVISIPIVLIALVLLLMP). Over 43 to 471 (GTSTSVSVIE…GSAIEAVSSP (429 aa)) the chain is Lumenal. Position 72–82 (72–82 (VIFDAGSSGSR)) interacts with ATP. Residue E194 is the Proton acceptor of the active site. Position 218–228 (218–228 (GVVDLGGGSVQ)) interacts with ATP. The N-linked (GlcNAc...) asparagine glycan is linked to N333.

Belongs to the GDA1/CD39 NTPase family. Ca(2+) is required as a cofactor. As to expression, expressed in roots, root hairs, root cap, leaves, stems, trichomes, phloem throughout the plant, guard cells, filaments of young stamens, stipules, papillae of stigmas, pollen, pollen tubes and the abscission zone of siliques.

The protein localises to the golgi apparatus membrane. Its subcellular location is the membrane. The catalysed reaction is a ribonucleoside 5'-triphosphate + 2 H2O = a ribonucleoside 5'-phosphate + 2 phosphate + 2 H(+). In terms of biological role, catalyzes the hydrolysis of phosphoanhydride bonds of nucleoside tri- and di-phosphates. Substrate preference is ATP &gt; ADP. Functions with APY2 to reduce extracellular ATP level which is essential for pollen germination and normal plant development. Plays a role in the regulation of stomatal function by modulating extracellular ATP levels in guard cells. This Arabidopsis thaliana (Mouse-ear cress) protein is Apyrase 1 (APY1).